Consider the following 723-residue polypeptide: Catalase-peroxidase (723 aa).

Positions 97–225 form a cross-link, tryptophyl-tyrosyl-methioninium (Trp-Tyr) (with M-251); the sequence is WHAAGSYRVT…LAAVQMGLIY (129 aa). His98 serves as the catalytic Proton acceptor. Positions 225–251 form a cross-link, tryptophyl-tyrosyl-methioninium (Tyr-Met) (with W-97); that stretch reads YVNPEGVNGKSDPLATAAQMRETFARM. Heme b is bound at residue His266.

It belongs to the peroxidase family. Peroxidase/catalase subfamily. In terms of assembly, homodimer or homotetramer. It depends on heme b as a cofactor. Post-translationally, formation of the three residue Trp-Tyr-Met cross-link is important for the catalase, but not the peroxidase activity of the enzyme.

It catalyses the reaction H2O2 + AH2 = A + 2 H2O. The enzyme catalyses 2 H2O2 = O2 + 2 H2O. Its function is as follows. Bifunctional enzyme with both catalase and broad-spectrum peroxidase activity. Involved in tumorigenesis. This is Catalase-peroxidase from Rhizobium radiobacter (Agrobacterium tumefaciens).